Reading from the N-terminus, the 387-residue chain is ATP-dependent Clp protease proteolytic subunit-related protein 1, chloroplastic (387 aa).

A chloroplast-targeting transit peptide spans 1 to 41; sequence MATALVSPLTSQLNHEAVCSKFVLPKSPFMSGSKLFSSNMP. The segment covering 355–365 has biased composition (basic and acidic residues); it reads QDSSFEKRDYD. Positions 355–387 are disordered; that stretch reads QDSSFEKRDYDGTLAQRAMRPGGGSPAAPAGLR.

It belongs to the peptidase S14 family. Component of the chloroplastic Clp protease core complex which consist of at least 16 proteins: CLPP4 (3 copies), CLPP5 (3 copies), CLPR4 (2 copies), ClpP1 (1 copy), CLPP6 (1 copy), CLPR2 (1 copy), CLPT1 (1 copy), CLPT2 (1 copy) and 3 copies of CLPP3 and/or CLPR1 and/or CLPR3. The core complex is organized in two heptameric rings, one containing CLPP3,4,5,6 in a 1:2:3:1 ratio and the other CLPP1 and CLPR1,2,3,4 in a 3:1:1:1:1 ratio.

It localises to the plastid. The protein resides in the chloroplast stroma. Required for chloroplast development and differentiation. The chain is ATP-dependent Clp protease proteolytic subunit-related protein 1, chloroplastic from Arabidopsis thaliana (Mouse-ear cress).